Here is a 108-residue protein sequence, read N- to C-terminus: Protein SMALL AUXIN UP-REGULATED RNA 51 (108 aa).

It belongs to the ARG7 family. In terms of tissue distribution, expressed in organ primordia. Hardly observed in leaves.

The protein resides in the cell membrane. Functionally, provide a mechanistic link between auxin and plasma membrane H(+)-ATPases (PM H(+)-ATPases, e.g. AHA1 and AHA2), and triggers PM H(+)-ATPases activity by promoting phosphorylation of their C-terminal autoinhibitory domain as a result of PP2C-D subfamily of type 2C phosphatases inhibition, thus leading to the acidification of the apoplast and the facilitation of solutes and water uptake to drive cell expansion. Triggers plant growth probably by promoting cell elongation. Regulates branch angles and bending. The polypeptide is Protein SMALL AUXIN UP-REGULATED RNA 51 (Arabidopsis thaliana (Mouse-ear cress)).